Reading from the N-terminus, the 297-residue chain is Cell division protein FtsX (297 aa).

Topologically, residues 1–21 (MRFGFLLNEVLTGFRRNVTMT) are cytoplasmic. The chain crosses the membrane as a helical span at residues 22–42 (IAMILTTAISVGLFGGGMLVV). Topologically, residues 43–171 (RLADSSRAIY…LFAVLDGLSN (129 aa)) are extracellular. A helical membrane pass occupies residues 172–192 (AAFAVALVQAIGAILLIANMV). The Cytoplasmic portion of the chain corresponds to 193–219 (QVAAYTRRTEIGIMRLVGASRWYTQLP). A helical transmembrane segment spans residues 220-240 (FLVEAMLAATMGVGIAVAGLM). Over 241 to 267 (VVRALFLENALNQFYQANLIAKVDYAD) the chain is Extracellular. Residues 268–288 (ILFITPWLLLLGVAMSGLTAY) form a helical membrane-spanning segment. Residues 289-297 (LTLRLYVRR) are Cytoplasmic-facing.

Belongs to the ABC-4 integral membrane protein family. FtsX subfamily. Forms a membrane-associated complex with FtsE.

The protein resides in the cell membrane. Its function is as follows. Part of the ABC transporter FtsEX involved in cellular division. The chain is Cell division protein FtsX from Mycobacterium tuberculosis (strain ATCC 25177 / H37Ra).